The chain runs to 89 residues: Small ribosomal subunit protein uS15 (89 aa).

Belongs to the universal ribosomal protein uS15 family. Part of the 30S ribosomal subunit. Forms a bridge to the 50S subunit in the 70S ribosome, contacting the 23S rRNA.

One of the primary rRNA binding proteins, it binds directly to 16S rRNA where it helps nucleate assembly of the platform of the 30S subunit by binding and bridging several RNA helices of the 16S rRNA. Functionally, forms an intersubunit bridge (bridge B4) with the 23S rRNA of the 50S subunit in the ribosome. The polypeptide is Small ribosomal subunit protein uS15 (Nitrosococcus oceani (strain ATCC 19707 / BCRC 17464 / JCM 30415 / NCIMB 11848 / C-107)).